Reading from the N-terminus, the 138-residue chain is Acidic phospholipase A2 Ts-A3 (138 aa).

Positions 1-16 (MRTLWIMAVLLLGVEG) are cleaved as a signal peptide. 7 disulfides stabilise this stretch: Cys42–Cys132, Cys44–Cys60, Cys59–Cys111, Cys65–Cys138, Cys66–Cys104, Cys73–Cys97, and Cys91–Cys102. Ca(2+) is bound by residues Tyr43, Gly45, and Gly47. His63 is a catalytic residue. Residue Asp64 participates in Ca(2+) binding. Asp105 is an active-site residue.

Requires Ca(2+) as cofactor. Expressed by the venom gland.

It is found in the secreted. The catalysed reaction is a 1,2-diacyl-sn-glycero-3-phosphocholine + H2O = a 1-acyl-sn-glycero-3-phosphocholine + a fatty acid + H(+). Snake venom phospholipase A2 (PLA2) that shows a moderate inhibition of ADP-induced human platelet aggregation when tested on platelet rich plasma. Exhibits high hydrolytic activities and prefers the anionic micelles (dPPC with deoxycholate) to the zwitterionic micelles (dPPC with Triton X-100). PLA2 catalyzes the calcium-dependent hydrolysis of the 2-acyl groups in 3-sn-phosphoglycerides. In Trimeresurus stejnegeri (Chinese green tree viper), this protein is Acidic phospholipase A2 Ts-A3.